The chain runs to 235 residues: Ubiquinone biosynthesis O-methyltransferase (235 aa).

Positions 39, 59, 80, and 124 each coordinate S-adenosyl-L-methionine.

This sequence belongs to the methyltransferase superfamily. UbiG/COQ3 family.

The enzyme catalyses a 3-demethylubiquinol + S-adenosyl-L-methionine = a ubiquinol + S-adenosyl-L-homocysteine + H(+). It carries out the reaction a 3-(all-trans-polyprenyl)benzene-1,2-diol + S-adenosyl-L-methionine = a 2-methoxy-6-(all-trans-polyprenyl)phenol + S-adenosyl-L-homocysteine + H(+). Its pathway is cofactor biosynthesis; ubiquinone biosynthesis. In terms of biological role, O-methyltransferase that catalyzes the 2 O-methylation steps in the ubiquinone biosynthetic pathway. The sequence is that of Ubiquinone biosynthesis O-methyltransferase from Vibrio parahaemolyticus serotype O3:K6 (strain RIMD 2210633).